The chain runs to 579 residues: MTIEFSNFSFRYESLDKPTLKNINLRIEKGEKIVIIGPSGSGKSTLGQCLNGLIPHAIKGETSGTLTIYGQDTAPFDMHQYTEQVGTVLQDTDSQFVGLSIGEDIAFALENQLTSNIDMYPLVKATAKMVDLEQMLDRSPHDLSGGQKQRVSLAGILVDDVDILLFDEPLAALDPKTGKKTIEIIDDLHRETGKTIVIIEHRLEDVLHRSVDRIILMESGEIIADTTPDEILASPLLEDYGIREPLYISALKEAGCAIEGDAKPSSLTTLPLEQYKPTVQAWFDGSTAQPPKTPAETLLEVRGLTYSYDGEKNALEDVSFDIKRGEFVSVLGKNGSGKSTITKLIMGVIEADSGSMSMNGQDLNELTIFERSQKVGVVMQNPNHMISHHMIFDEVAFGLRNRGIKEKQIEAKVLEVLELCGLSKYRHWPIEALSYGQKKRVTIASILVLEPELLILDEPTAGQDYRNYTSMLSFIEKLNRELGVTVMIISHDMHLVLEYTTRSIVIADSKLVADAPMTQVFSSPELLDQANLTTTSLFDLATKVGIEDTNGFMQHFINVEKAHRQQKSGEVNQPEKAVA.

2 consecutive ABC transporter domains span residues 3 to 244 and 299 to 533; these read IEFS…GIRE and LEVR…ANLT. Residues 37 to 44 and 332 to 339 each bind ATP; these read GPSGSGKS and GKNGSGKS.

This sequence belongs to the ABC transporter superfamily.

Its subcellular location is the cell inner membrane. Its function is as follows. Probably part of an ABC transporter complex. Responsible for energy coupling to the transport system. This chain is Putative ABC transporter ATP-binding protein VPA1482, found in Vibrio parahaemolyticus serotype O3:K6 (strain RIMD 2210633).